A 215-amino-acid polypeptide reads, in one-letter code: MKYQLTALEARVIGCLLEKQVTTPEQYPLSVNGVVTACNQKTNREPVMNLSESEVQEQLDNLVKRHYLRTVSGFGNRVTKYEQRFCNSEFGDLKLSAAEVALITTLLLRGAQTPGELRSRAARMYEFSDMAEVESTLEQLANREDGPFVVRLAREPGKRESRYMHLFSGEVEDQPAVTDMSNAVDGDLQARVEALEIEVAELKQRLDSLLAHQGD.

N6-acetyllysine is present on Lys80.

It belongs to the UPF0502 family.

This Escherichia coli O7:K1 (strain IAI39 / ExPEC) protein is UPF0502 protein YceH.